A 129-amino-acid polypeptide reads, in one-letter code: Snaclec coagulation factor IX-binding protein subunit A (129 aa).

Residues 1-129 enclose the C-type lectin domain; the sequence is DCPSGWSSYE…GQQNPFVCEA (129 aa). Cystine bridges form between Cys-2-Cys-13, Cys-30-Cys-127, and Cys-102-Cys-119. Positions 41, 43, and 47 each coordinate Ca(2+). Glu-128 provides a ligand contact to Ca(2+).

This sequence belongs to the snaclec family. Heterodimer of subunits A and B; disulfide-linked. As to expression, expressed by the venom gland.

Its subcellular location is the secreted. Anticoagulant protein which binds to the gamma-carboxyglutamic acid-domain regions of factor IX (F9) (but not factor X) in the presence of calcium with a 1 to 1 stoichiometry. The chain is Snaclec coagulation factor IX-binding protein subunit A from Protobothrops flavoviridis (Habu).